Consider the following 364-residue polypeptide: Putative methylthioribose-1-phosphate isomerase (364 aa).

Residues 57 to 59 (RGA), Arg-100, and Gln-206 each bind substrate. Asp-247 functions as the Proton donor in the catalytic mechanism. 257 to 258 (NK) contacts substrate.

This sequence belongs to the eIF-2B alpha/beta/delta subunits family. MtnA subfamily.

The enzyme catalyses 5-(methylsulfanyl)-alpha-D-ribose 1-phosphate = 5-(methylsulfanyl)-D-ribulose 1-phosphate. Functionally, catalyzes the interconversion of methylthioribose-1-phosphate (MTR-1-P) into methylthioribulose-1-phosphate (MTRu-1-P). This Pyrococcus horikoshii (strain ATCC 700860 / DSM 12428 / JCM 9974 / NBRC 100139 / OT-3) protein is Putative methylthioribose-1-phosphate isomerase.